A 165-amino-acid polypeptide reads, in one-letter code: Nucleotide-binding protein PMN2A_1813 (165 aa).

This sequence belongs to the YajQ family.

Its function is as follows. Nucleotide-binding protein. The chain is Nucleotide-binding protein PMN2A_1813 from Prochlorococcus marinus (strain NATL2A).